Here is a 261-residue protein sequence, read N- to C-terminus: Thiazole synthase (261 aa).

The active-site Schiff-base intermediate with DXP is the Lys-102. Residues Gly-163, 189-190 (AG), and 211-212 (NT) each bind 1-deoxy-D-xylulose 5-phosphate.

It belongs to the ThiG family. Homotetramer. Forms heterodimers with either ThiH or ThiS.

Its subcellular location is the cytoplasm. It carries out the reaction [ThiS sulfur-carrier protein]-C-terminal-Gly-aminoethanethioate + 2-iminoacetate + 1-deoxy-D-xylulose 5-phosphate = [ThiS sulfur-carrier protein]-C-terminal Gly-Gly + 2-[(2R,5Z)-2-carboxy-4-methylthiazol-5(2H)-ylidene]ethyl phosphate + 2 H2O + H(+). Its pathway is cofactor biosynthesis; thiamine diphosphate biosynthesis. Its function is as follows. Catalyzes the rearrangement of 1-deoxy-D-xylulose 5-phosphate (DXP) to produce the thiazole phosphate moiety of thiamine. Sulfur is provided by the thiocarboxylate moiety of the carrier protein ThiS. In vitro, sulfur can be provided by H(2)S. The polypeptide is Thiazole synthase (Myxococcus xanthus (strain DK1622)).